The chain runs to 475 residues: Membrane-bound lytic murein transglycosylase F (475 aa).

Residues 1-30 (MKKLKINYLFIGILTLLLAAALWPSIPWFG) form the signal peptide. The non-LT domain stretch occupies residues 31 to 269 (KTENHIAAIQ…RIEEKYLGHG (239 aa)). The LT domain stretch occupies residues 270-475 (DDFDYVDTRS…MKLAQDYPAV (206 aa)). Glu-314 is an active-site residue.

In the N-terminal section; belongs to the bacterial solute-binding protein 3 family. It in the C-terminal section; belongs to the transglycosylase Slt family.

It localises to the cell outer membrane. It catalyses the reaction Exolytic cleavage of the (1-&gt;4)-beta-glycosidic linkage between N-acetylmuramic acid (MurNAc) and N-acetylglucosamine (GlcNAc) residues in peptidoglycan, from either the reducing or the non-reducing ends of the peptidoglycan chains, with concomitant formation of a 1,6-anhydrobond in the MurNAc residue.. Its function is as follows. Murein-degrading enzyme that degrades murein glycan strands and insoluble, high-molecular weight murein sacculi, with the concomitant formation of a 1,6-anhydromuramoyl product. Lytic transglycosylases (LTs) play an integral role in the metabolism of the peptidoglycan (PG) sacculus. Their lytic action creates space within the PG sacculus to allow for its expansion as well as for the insertion of various structures such as secretion systems and flagella. In Salmonella typhi, this protein is Membrane-bound lytic murein transglycosylase F.